A 314-amino-acid polypeptide reads, in one-letter code: tRNA dimethylallyltransferase (314 aa).

An ATP-binding site is contributed by Gly-13–Thr-20. Thr-15 to Thr-20 provides a ligand contact to substrate. The segment at Asp-38–Gln-41 is interaction with substrate tRNA.

This sequence belongs to the IPP transferase family. Monomer. Mg(2+) is required as a cofactor.

The catalysed reaction is adenosine(37) in tRNA + dimethylallyl diphosphate = N(6)-dimethylallyladenosine(37) in tRNA + diphosphate. Catalyzes the transfer of a dimethylallyl group onto the adenine at position 37 in tRNAs that read codons beginning with uridine, leading to the formation of N6-(dimethylallyl)adenosine (i(6)A). The chain is tRNA dimethylallyltransferase from Desulfotalea psychrophila (strain LSv54 / DSM 12343).